Consider the following 263-residue polypeptide: HTH-type transcriptional repressor NanR (263 aa).

A disordered region spans residues 1 to 23; that stretch reads MSPMNAFDPQAEDSTTTIGRNLR. Residues 30-98 enclose the HTH gntR-type domain; sequence KKLSEMVEEE…NGERARVSRP (69 aa). A DNA-binding region (H-T-H motif) is located at residues 58 to 77; it reads ERELMAFFNVGRPSVREALA.

This sequence belongs to the NanR family.

Its function is as follows. Transcriptional repressor that controls expression of the genes required for the catabolism of sialic acids. The chain is HTH-type transcriptional repressor NanR from Escherichia coli O45:K1 (strain S88 / ExPEC).